Consider the following 121-residue polypeptide: Small ribosomal subunit protein uS11 (121 aa).

It belongs to the universal ribosomal protein uS11 family. As to quaternary structure, part of the 30S ribosomal subunit. Interacts with proteins S7 and S18. Binds to IF-3.

Its function is as follows. Located on the platform of the 30S subunit, it bridges several disparate RNA helices of the 16S rRNA. Forms part of the Shine-Dalgarno cleft in the 70S ribosome. This chain is Small ribosomal subunit protein uS11, found in Mycoplasma pneumoniae (strain ATCC 29342 / M129 / Subtype 1) (Mycoplasmoides pneumoniae).